A 79-amino-acid chain; its full sequence is Moronecidin (79 aa).

An N-terminal signal peptide occupies residues 1–22 (MKCATLSLVLSMVVLMAEPGDA). Gly44 is modified (glycine amide). The disordered stretch occupies residues 45-68 (GKAEQDQQDQQYQQDQQDQQAQQY). Positions 47–79 (AEQDQQDQQYQQDQQDQQAQQYQRFNRERAAFD) are excised as a propeptide. The span at 52–68 (QDQQYQQDQQDQQAQQY) shows a compositional bias: low complexity.

In terms of tissue distribution, expressed in gill, skin, intestine, spleen, anterior kidney, and blood cells.

It is found in the secreted. Antimicrobial peptide with broad-spectrum activity against Gram-positive and Gram-negative bacteria as well as against a variety of fungi. Rapidly inactivates both channel catfish herpesvirus (ED(50)=4 uM) and frog virus 3 (ED(50)=13 uM) over a wide temperature range. Seems to disrupt the membranes by adopting an alpha helical conformation. The chain is Moronecidin from Morone chrysops (White bass).